Consider the following 181-residue polypeptide: Achaete-scute homolog 3 (181 aa).

A basic motif region spans residues 93–106; the sequence is AFTRKRNERERQRV. Residues 93–145 enclose the bHLH domain; sequence AFTRKRNERERQRVKCVNEGYAQLRHHLPEEYLEKRLSKVETLRAAIKYINYL. The interval 107–145 is helix-loop-helix motif; the sequence is KCVNEGYAQLRHHLPEEYLEKRLSKVETLRAAIKYINYL.

Efficient DNA binding requires dimerization with another bHLH protein. In terms of tissue distribution, widely expressed in fetal and adult tissues.

The protein resides in the nucleus. In terms of biological role, transcriptional repressor. Inhibits myogenesis. Plays a role in progenitor cells which differentiate into ductal and acinar, but not myoepithelial, cell lineages in the salivary glands. Involved in the functions of the microvillar cells and Bowman's glands and probably, in a non-cell-autonomous manner, in the development or regeneration of a complete olfactory epithelium (OE). The protein is Achaete-scute homolog 3 of Homo sapiens (Human).